The sequence spans 116 residues: UPF0342 protein RBAM_010030 (116 aa).

The protein belongs to the UPF0342 family.

In Bacillus velezensis (strain DSM 23117 / BGSC 10A6 / LMG 26770 / FZB42) (Bacillus amyloliquefaciens subsp. plantarum), this protein is UPF0342 protein RBAM_010030.